Reading from the N-terminus, the 481-residue chain is UDP-N-acetylmuramoyl-L-alanyl-D-glutamate--L-lysine ligase (481 aa).

UDP-N-acetyl-alpha-D-muramoyl-L-alanyl-D-glutamate is bound at residue serine 42. 118–124 (GTKGKTT) provides a ligand contact to ATP. UDP-N-acetyl-alpha-D-muramoyl-L-alanyl-D-glutamate contacts are provided by residues glutamine 158, 160 to 161 (TT), serine 187, and arginine 195. Lysine 229 is subject to N6-carboxylysine. The L-lysine recognition motif motif lies at 404 to 407 (DDPN).

The protein belongs to the MurCDEF family. MurE subfamily. In terms of processing, carboxylation is probably crucial for Mg(2+) binding and, consequently, for the gamma-phosphate positioning of ATP.

The protein localises to the cytoplasm. The catalysed reaction is UDP-N-acetyl-alpha-D-muramoyl-L-alanyl-D-glutamate + L-lysine + ATP = UDP-N-acetyl-alpha-D-muramoyl-L-alanyl-gamma-D-glutamyl-L-lysine + ADP + phosphate + H(+). Its pathway is cell wall biogenesis; peptidoglycan biosynthesis. Functionally, catalyzes the addition of L-lysine to the nucleotide precursor UDP-N-acetylmuramoyl-L-alanyl-D-glutamate (UMAG) in the biosynthesis of bacterial cell-wall peptidoglycan. The protein is UDP-N-acetylmuramoyl-L-alanyl-D-glutamate--L-lysine ligase of Streptococcus pyogenes serotype M6 (strain ATCC BAA-946 / MGAS10394).